A 503-amino-acid polypeptide reads, in one-letter code: Lysine--tRNA ligase (503 aa).

2 residues coordinate Mg(2+): E412 and E419.

This sequence belongs to the class-II aminoacyl-tRNA synthetase family. As to quaternary structure, homodimer. It depends on Mg(2+) as a cofactor.

It localises to the cytoplasm. It catalyses the reaction tRNA(Lys) + L-lysine + ATP = L-lysyl-tRNA(Lys) + AMP + diphosphate. In Buchnera aphidicola subsp. Schizaphis graminum (strain Sg), this protein is Lysine--tRNA ligase.